Reading from the N-terminus, the 271-residue chain is Probable ribosome biogenesis GTPase A (271 aa).

The region spanning 21–175 (HDQLKKLASS…LSDTPGVFFK (155 aa)) is the CP-type G domain. GTP is bound by residues 127–132 (NVGKSS) and Gly171.

Belongs to the TRAFAC class YlqF/YawG GTPase family. MTG1 subfamily.

It localises to the cytoplasm. Required for a late step of 50S ribosomal subunit assembly. Has GTPase activity. Binds to the 23S rRNA. The polypeptide is Probable ribosome biogenesis GTPase A (rbgA) (Mycoplasma pneumoniae (strain ATCC 29342 / M129 / Subtype 1) (Mycoplasmoides pneumoniae)).